Here is a 355-residue protein sequence, read N- to C-terminus: LIM/homeobox protein lim-4 (355 aa).

2 LIM zinc-binding domains span residues 96 to 155 (VICT…THVT) and 166 to 228 (PKCA…LVEG). The segment at residues 239–298 (TKRVRTTFAEDQLSVLQTYFNRDSNPDGADLEKIASMTGLSKRVTQVWFQNSRARQKKWH) is a DNA-binding region (homeobox). The disordered stretch occupies residues 291 to 336 (RARQKKWHQKSEGDNGDSQRSSVGPSSPSQKSDSSSEMMYPTSVTT). The segment covering 306–326 (GDSQRSSVGPSSPSQKSDSSS) has biased composition (low complexity).

Interacts with transcription factor sox-2. As to expression, expressed in the AWB sensory neurons and in one RME motor neuron (RMEV), two RMD motor neurons (RMDL and RMDR), the RID, RIV, SAA and SIA interneurons and the SMB sensory/inter/motor neurons.

It is found in the nucleus. In terms of biological role, transcription factor that binds to the promoter of target genes. Regulates genes involved in serotonin synthesis and release in serotonergic ADF neurons. Involved in specification of neuron cell fate, olfactory receptor expression, locomotion, and foraging behavior. Required in AWB olfactory neurons to repress AWC cell fate and promote the AWB cell fate during early development. Cooperates with additional factors to direct the differentiation of the olfactory neurons, functioning with the transcription factor sox-2 to suppress AWC terminal differentiation and promote AWB neuron differentiation. Involved in regulating terminal specification and maintenance of the SMB sensory/inter/motor neurons. Plays a role in regulation of RID motor neuron differentiation, but is dispensable for motor axon outgrowth in the dorsal nerve cord. May regulate its own expression. The polypeptide is LIM/homeobox protein lim-4 (Caenorhabditis elegans).